A 63-amino-acid polypeptide reads, in one-letter code: Large ribosomal subunit protein uL29 (63 aa).

This sequence belongs to the universal ribosomal protein uL29 family.

In Pseudomonas aeruginosa (strain UCBPP-PA14), this protein is Large ribosomal subunit protein uL29.